The sequence spans 1305 residues: Contactin-associated protein-like 5 (1305 aa).

An N-terminal signal peptide occupies residues 1-24 (MDSVPRLTGVFTLLLSGLWHLGSS). Residues 25 to 1236 (ATNYNCDDPL…PLTNAVRSDS (1212 aa)) lie on the Extracellular side of the membrane. The region spanning 30–174 (CDDPLASLLS…IGMRVEVYGC (145 aa)) is the F5/8 type C domain. A disulfide bridge connects residues cysteine 30 and cysteine 174. 2 consecutive Laminin G-like domains span residues 180 to 360 (VADF…TFSC) and 367 to 544 (PITF…IDLC). Asparagine 282, asparagine 355, and asparagine 496 each carry an N-linked (GlcNAc...) asparagine glycan. Cysteine 329 and cysteine 360 are joined by a disulfide. 4 cysteine pairs are disulfide-bonded: cysteine 512-cysteine 544, cysteine 550-cysteine 561, cysteine 555-cysteine 570, and cysteine 572-cysteine 582. Residues 546–583 (IKDRCLPNYCEHGGFCSQSWTTFYCNCSNTGYTGATCH) form the EGF-like 1 domain. In terms of domain architecture, Fibrinogen C-terminal spans 584 to 790 (NSLYEQSCEV…LRCYGDRHFW (207 aa)). Residue asparagine 622 is glycosylated (N-linked (GlcNAc...) asparagine). One can recognise a Laminin G-like 3 domain in the interval 791–956 (NAVSFYTEAS…KVTSGVRPGC (166 aa)). 5 disulfides stabilise this stretch: cysteine 929–cysteine 956, cysteine 960–cysteine 973, cysteine 967–cysteine 982, cysteine 984–cysteine 994, and cysteine 1163–cysteine 1198. The EGF-like 2 domain occupies 957–995 (PGHCSTYGSICHNGGKCVEKYSGYFCDCTNSPYEGPFCK). The Laminin G-like 4 domain maps to 1000 to 1198 (AVFEAGTSVT…VQGTLMESSC (199 aa)). A helical transmembrane segment spans residues 1237–1257 (AVIGGVIAVVIFIIFSIIGIM). The Cytoplasmic segment spans residues 1258–1305 (TRFLYQHKQSHRTNQMKEKEYPENLDSSFRNDIDLQNTVSECKREYFI).

It belongs to the neurexin family.

The protein localises to the membrane. May play a role in the correct development and proper functioning of the peripheral and central nervous system and be involved in cell adhesion and intercellular communication. The sequence is that of Contactin-associated protein-like 5 (CNTNAP5) from Canis lupus familiaris (Dog).